Consider the following 76-residue polypeptide: Putative Fe(2+) transport protein A (76 aa).

The protein belongs to the FeoA family.

Functionally, might be involved in Fe(2+) ion uptake. The chain is Putative Fe(2+) transport protein A from Helicobacter pylori (strain ATCC 700392 / 26695) (Campylobacter pylori).